A 419-amino-acid chain; its full sequence is L-rhamnose isomerase (419 aa).

Mn(2+)-binding residues include H262, D294, and D296.

The protein belongs to the rhamnose isomerase family. In terms of assembly, homotetramer. Mn(2+) serves as cofactor.

It is found in the cytoplasm. The enzyme catalyses L-rhamnopyranose = L-rhamnulose. The protein operates within carbohydrate degradation; L-rhamnose degradation; glycerone phosphate from L-rhamnose: step 1/3. Functionally, catalyzes the interconversion of L-rhamnose and L-rhamnulose. The chain is L-rhamnose isomerase from Escherichia coli (strain 55989 / EAEC).